A 65-amino-acid polypeptide reads, in one-letter code: Toxin VmKTx1 (65 aa).

A signal peptide spans 1-21 (MKTSCLLTILLLSFLVAVAVA). Residues 22 to 28 (EGERSAR) constitute a propeptide that is removed on maturation. 4 cysteine pairs are disulfide-bonded: C34-C54, C40-C59, C44-C61, and C49-C64. Position 64 is a cysteine amide (C64).

Belongs to the short scorpion toxin superfamily. Potassium channel inhibitor family. Alpha-KTx 23 subfamily. In terms of tissue distribution, expressed by the venom gland.

Its subcellular location is the secreted. Voltage-gated potassium channel inhibitor. Selectively and reversibly binds (Kd=0.77 nM) and blocks hKv1.3/KCNA3 potassium channels of human T-lymphocytes. Also shows a very weak effect on hKv1.2/KCNA2 (Kd=7.1 uM). Also reduces the fraction of CD40L expressing T cells that are stimulated by alphaCD3/alphaCD28. This Vaejovis mexicanus smithi (Mexican scorpion) protein is Toxin VmKTx1.